We begin with the raw amino-acid sequence, 308 residues long: D-alanine--D-alanine ligase (308 aa).

Residues lysine 104 to aspartate 301 form the ATP-grasp domain. Isoleucine 130–threonine 185 lines the ATP pocket. The Mg(2+) site is built by aspartate 255, glutamate 268, and asparagine 270.

The protein belongs to the D-alanine--D-alanine ligase family. Requires Mg(2+) as cofactor. It depends on Mn(2+) as a cofactor.

The protein resides in the cytoplasm. The enzyme catalyses 2 D-alanine + ATP = D-alanyl-D-alanine + ADP + phosphate + H(+). Its pathway is cell wall biogenesis; peptidoglycan biosynthesis. Cell wall formation. The sequence is that of D-alanine--D-alanine ligase from Acinetobacter baumannii (strain AB307-0294).